The following is a 296-amino-acid chain: PYK10-binding protein 2 (296 aa).

A disordered region spans residues 1-20; sequence MAQKVEAKGGKGGNQWDDGS. N-acetylalanine is present on A2. 2 consecutive Jacalin-type lectin domains span residues 2-142 and 150-293; these read AQKV…YFAP and AKPL…HVRP.

The protein belongs to the jacalin lectin family. Component of the PYK10 complex, at least composed of PYK10/BGLU23, BGLU21, BGLU22, JAL22, JAL23, PBP1/JAL30, PBP2/JAL31, JAL32, JAL33, JAL34, JAL35, GLL22 and GLL23.

Its function is as follows. Polymerizer-type lectin that may facilitate the correct polymerization of BGLU23/PYK10 upon tissue damage. Activates BGLU21, BGLU22 and BGLU23. This is PYK10-binding protein 2 (PBP2) from Arabidopsis thaliana (Mouse-ear cress).